We begin with the raw amino-acid sequence, 918 residues long: Translation initiation factor IF-2 (918 aa).

A disordered region spans residues 39–321 (DDASEKHLRN…KRDGRMKETT (283 aa)). The segment covering 95–146 (KSSNNESTTRNNNNNKNGNQNRNNTNGRPNNNQNRPNNNRNQNNNRNGNRPN) has biased composition (low complexity). Basic and acidic residues predominate over residues 148 to 158 (PKRDEKQDRIR). Residues 159–174 (ASVAEAARMAAQANRE) are compositionally biased toward low complexity. Residues 180 to 190 (PQANRQRTNSA) show a composition bias toward polar residues. 3 stretches are compositionally biased toward low complexity: residues 201 to 231 (NNQNRPNNNNRNGNNVNRTNNNNRPNNNNRN), 237 to 267 (SRPNNTNQTTNNRPANNTTRPAAPAATTANN), and 278 to 296 (GRNNNSRGGNRFGNNQNRP). A compositionally biased stretch (basic residues) spans 302–313 (RKNKKRNRKAKR). Residues 419–588 (SRPPVVTIMG…LLQAEVLELK (170 aa)) form the tr-type G domain. The tract at residues 428–435 (GHVDHGKT) is G1. 428–435 (GHVDHGKT) is a GTP binding site. The tract at residues 453-457 (GITQG) is G2. Positions 474-477 (DTPG) are G3. Residues 474-478 (DTPGH) and 528-531 (NKID) each bind GTP. The interval 528–531 (NKID) is G4. The segment at 564–566 (SAK) is G5.

Belongs to the TRAFAC class translation factor GTPase superfamily. Classic translation factor GTPase family. IF-2 subfamily.

It localises to the cytoplasm. One of the essential components for the initiation of protein synthesis. Protects formylmethionyl-tRNA from spontaneous hydrolysis and promotes its binding to the 30S ribosomal subunits. Also involved in the hydrolysis of GTP during the formation of the 70S ribosomal complex. The sequence is that of Translation initiation factor IF-2 from Pediococcus pentosaceus (strain ATCC 25745 / CCUG 21536 / LMG 10740 / 183-1w).